A 550-amino-acid polypeptide reads, in one-letter code: Natural resistance-associated macrophage protein 1 (550 aa).

The tract at residues 1 to 45 is disordered; it reads MTGDKGPQRLSGSSYGSISSPTSPTSPGPQQAPPRETYLSEKIPI. The Cytoplasmic segment spans residues 1–58; it reads MTGDKGPQRLSGSSYGSISSPTSPTSPGPQQAPPRETYLSEKIPIPDTKPGTFSLRKL. The span at 11–23 shows a compositional bias: low complexity; sequence SGSSYGSISSPTS. Residues 59 to 76 traverse the membrane as a helical segment; that stretch reads WAFTGPGFLMSIAFLDPG. Topologically, residues 77-85 are extracellular; it reads NIESDLQAG. The chain crosses the membrane as a helical span at residues 86–105; that stretch reads AVAGFKLLWVLLWATVLGLL. The Cytoplasmic portion of the chain corresponds to 106–142; that stretch reads CQRLAARLGVVTGKDLGEVCHLYYPKVPRTVLWLTIE. A helical membrane pass occupies residues 143–163; the sequence is LAIVGSDMQEVIGTAIAFNLL. Residues 164–167 lie on the Extracellular side of the membrane; it reads SAGR. The chain crosses the membrane as a helical span at residues 168–187; it reads IPLWGGVLITIVDTFFFLFL. Residues 188-196 are Cytoplasmic-facing; that stretch reads DNYGLRKLE. Residues 197–217 traverse the membrane as a helical segment; sequence AFFGLLITIMALTFGYEYVVA. Over 218-240 the chain is Extracellular; the sequence is RPEQGALLRGLFLPSCPGCGHPE. A helical membrane pass occupies residues 241–259; the sequence is LLQAVGIVGAIIMPHNIYL. The Cytoplasmic portion of the chain corresponds to 260-287; the sequence is HSALVKSREIDRARRADIREANMYFLIE. Residues 288–307 form a helical membrane-spanning segment; sequence ATIALSVSFIINLFVMAVFG. At 308–349 the chain is on the extracellular side; that stretch reads QAFYQKTNQAAFNICANSSLHDYAKIFPMNNATVAVDIYQGG. Asn-324 and Asn-338 each carry an N-linked (GlcNAc...) asparagine glycan. A helical membrane pass occupies residues 350-369; that stretch reads VILGCLFGPAALYIWAIGLL. Topologically, residues 370-400 are cytoplasmic; sequence AAGQSSTMTGTYAGQFVMEGFLRLRWSRFAR. The helical transmembrane segment at 401–418 threads the bilayer; that stretch reads VLLTRSCAILPTVLVAVF. Over 419–429 the chain is Extracellular; sequence RDLRDLSGLND. Residues 430-450 traverse the membrane as a helical segment; the sequence is LLNVLQSLLLPFAVLPILTFT. Residues 451-466 are Cytoplasmic-facing; the sequence is SMPTLMQEFANGLLNK. The chain crosses the membrane as a helical span at residues 467–488; sequence VVTSSIMVLVCAINLYFVVSYL. Residues 489–496 lie on the Extracellular side of the membrane; that stretch reads PSLPHPAY. The helical transmembrane segment at 497 to 516 threads the bilayer; it reads FGLAALLAAAYLGLSTYLVW. Topologically, residues 517-550 are cytoplasmic; it reads TCCLAHGATFLAHSSHHHFLYGLLEEDQKGETSG.

This sequence belongs to the NRAMP family. As to expression, macrophages; peripheral blood leukocytes, lung, spleen and liver.

The protein resides in the late endosome membrane. The protein localises to the lysosome membrane. The catalysed reaction is Zn(2+)(in) + H(+)(out) = Zn(2+)(out) + H(+)(in). It catalyses the reaction Fe(2+)(in) + H(+)(out) = Fe(2+)(out) + H(+)(in). It carries out the reaction Mn(2+)(in) + H(+)(out) = Mn(2+)(out) + H(+)(in). In terms of biological role, macrophage-specific antiporter that fluxes metal ions in either direction against a proton gradient. Localized to late endosomal lysosomal membranes, delivers bivalent cations from the cytosol into these acidic compartments where they may directly affect antimicrobial activity. Involved in iron metabolism and host natural resistance to infection with intracellular parasites. Pathogen resistance involves sequestration of Fe(2+) and Mn(2+), cofactors of both prokaryotic and eukaryotic catalases and superoxide dismutases, not only to protect the macrophage against its own generation of reactive oxygen species, but to deny the cations to the pathogen for synthesis of its protective enzymes. In Homo sapiens (Human), this protein is Natural resistance-associated macrophage protein 1.